Consider the following 116-residue polypeptide: Non-specific lipid transfer protein GPI-anchored 17 (116 aa).

The signal sequence occupies residues M1 to A24. 3 disulfide bridges follow: C31/C74, C42/C58, and C59/C99. N107 carries the GPI-anchor amidated asparagine lipid modification. Positions G108–L116 are cleaved as a propeptide — removed in mature form. N113 carries N-linked (GlcNAc...) asparagine glycosylation.

The protein belongs to the plant LTP family. As to expression, expressed in seedlings, preferentially in roots.

The protein localises to the cell membrane. Functionally, probable lipid transfer protein. The sequence is that of Non-specific lipid transfer protein GPI-anchored 17 from Arabidopsis thaliana (Mouse-ear cress).